The chain runs to 555 residues: Esterase-5A (555 aa).

The N-terminal stretch at 1-19 (MHLVRWLICLIQLWIQLGA) is a signal peptide. C87 and C106 are joined by a disulfide. Residues N95 and N116 are each glycosylated (N-linked (GlcNAc...) asparagine). S210 serves as the catalytic Acyl-ester intermediate. Cysteines 262 and 274 form a disulfide. Residues N479 and N510 are each glycosylated (N-linked (GlcNAc...) asparagine). C518 and C539 are oxidised to a cystine.

This sequence belongs to the type-B carboxylesterase/lipase family.

The protein resides in the secreted. The catalysed reaction is a carboxylic ester + H2O = an alcohol + a carboxylate + H(+). In Drosophila miranda (Fruit fly), this protein is Esterase-5A (Est-5A).